Reading from the N-terminus, the 174-residue chain is Chorion class CB protein M5H4 (174 aa).

Positions 1-20 (MTTIVVLICASALFVQLAFS) are cleaved as a signal peptide. Positions 21 to 71 (QCLGRDPVIGFGGAYGSGWGGYDAISPYDGLGYGVPYSAGFIGLSPSNLAA) are left arm. The central domain stretch occupies residues 72-142 (SCGGALAVNS…GDGAIGIVSE (71 aa)). Residues 143 to 174 (APIVAPASIGYGQWPVNAGYKGIGPCGCGGLY) form a right arm region.

Belongs to the chorion protein family.

Its function is as follows. This protein is one of many from the eggshell of the silk moth. The polypeptide is Chorion class CB protein M5H4 (Bombyx mori (Silk moth)).